The chain runs to 75 residues: Large ribosomal subunit protein bL31 (75 aa).

The protein belongs to the bacterial ribosomal protein bL31 family. Type A subfamily. As to quaternary structure, part of the 50S ribosomal subunit.

In terms of biological role, binds the 23S rRNA. The chain is Large ribosomal subunit protein bL31 from Rhodopseudomonas palustris (strain BisB18).